Reading from the N-terminus, the 354-residue chain is Methionine import ATP-binding protein MetN (354 aa).

Residues 8 to 250 (LDHIDITFRQ…PKEALTQEFI (243 aa)) form the ABC transporter domain. 42 to 49 (GYSGAGKS) is a binding site for ATP.

It belongs to the ABC transporter superfamily. Methionine importer (TC 3.A.1.24) family. The complex is composed of two ATP-binding proteins (MetN), two transmembrane proteins (MetI) and a solute-binding protein (MetQ).

The protein resides in the cell membrane. It catalyses the reaction L-methionine(out) + ATP + H2O = L-methionine(in) + ADP + phosphate + H(+). The enzyme catalyses D-methionine(out) + ATP + H2O = D-methionine(in) + ADP + phosphate + H(+). Functionally, part of the ABC transporter complex MetNIQ involved in methionine import. Responsible for energy coupling to the transport system. This chain is Methionine import ATP-binding protein MetN, found in Streptococcus pyogenes serotype M3 (strain ATCC BAA-595 / MGAS315).